We begin with the raw amino-acid sequence, 147 residues long: Hemoglobin subunit beta (147 aa).

Val-2 is subject to N-acetylvaline. The Globin domain occupies 3 to 147 (HLTPEEKSAV…VANALAHKYH (145 aa)). A Phosphothreonine modification is found at Thr-13. Ser-45 carries the phosphoserine modification. At Lys-60 the chain carries N6-acetyllysine. His-64 provides a ligand contact to heme b. N6-acetyllysine is present on Lys-83. His-93 serves as a coordination point for heme b. S-nitrosocysteine is present on Cys-94. An N6-acetyllysine modification is found at Lys-145.

The protein belongs to the globin family. As to quaternary structure, heterotetramer of two alpha chains and two beta chains in adult hemoglobin A (HbA). In terms of tissue distribution, red blood cells.

Functionally, involved in oxygen transport from the lung to the various peripheral tissues. In Pan paniscus (Pygmy chimpanzee), this protein is Hemoglobin subunit beta (HBB).